We begin with the raw amino-acid sequence, 592 residues long: Dictomallein-1 (592 aa).

Positions 1-19 (MKILIILLVFLNLITNINC) are cleaved as a signal peptide. A Peptidase M66 domain is found at 140–402 (PNIGHETNLN…QNYFKDSIIY (263 aa)). Position 294 (His-294) interacts with Zn(2+). Glu-295 is an active-site residue. Zn(2+) contacts are provided by His-298 and His-304.

This sequence belongs to the dictomallein family. Requires Zn(2+) as cofactor.

It localises to the secreted. The chain is Dictomallein-1 (dtmlA) from Dictyostelium discoideum (Social amoeba).